The sequence spans 535 residues: EH domain-containing protein 3 (535 aa).

Position 1 is an N-acetylmethionine (M1). A Dynamin-type G domain is found at 55–286 (FDNKPMVLLV…DLFRDIQSLP (232 aa)). The interval 65 to 72 (GQYSTGKT) is G1 motif. 65-72 (GQYSTGKT) provides a ligand contact to ATP. The tract at residues 91 to 92 (EP) is G2 motif. Residues 153-156 (DTPG) form a G3 motif region. A coiled-coil region spans residues 198–227 (DEFSEVIKALKNHEDKMRVVLNKADQIETQ). Residues 219–222 (NKAD) are G4 motif. K220 contacts ATP. Position 243 (I243) is a region of interest, G5 motif. W258 lines the ATP pocket. K315 is covalently cross-linked (Glycyl lysine isopeptide (Lys-Gly) (interchain with G-Cter in SUMO)). 2 positions are modified to phosphoserine: S349 and S456. Positions 444–532 (DKPMYDEIFY…AHLLPPSKRK (89 aa)) constitute an EH domain. Residues 476–511 (LPNSVLGKIWKLADIDKDGMLDDDEFALANHLIKVK) form the EF-hand domain. Residues D489, D491, D493, M495, and E500 each contribute to the Ca(2+) site. K511 participates in a covalent cross-link: Glycyl lysine isopeptide (Lys-Gly) (interchain with G-Cter in SUMO).

This sequence belongs to the TRAFAC class dynamin-like GTPase superfamily. Dynamin/Fzo/YdjA family. EHD subfamily. Homooligomer, and heterooligomer with EHD1, EHD2 and EHD4, ATP-binding is required for heterooligomerization. Interacts with PACSIN1. Interacts with PACSIN2. Interacts (via EH domain) with MICALL1. Interacts (via EH domain) with RAB11FIP2. Interacts with ANK2. In terms of tissue distribution, highly expressed in heart and brain and moderately expressed in kidney, liver, and placenta.

Its subcellular location is the recycling endosome membrane. The protein localises to the cell membrane. It is found in the cell projection. It localises to the cilium membrane. In terms of biological role, ATP- and membrane-binding protein that controls membrane reorganization/tubulation upon ATP hydrolysis. In vitro causes tubulation of endocytic membranes. Binding to phosphatidic acid induces its membrane tubulation activity. Plays a role in endocytic transport. Involved in early endosome to recycling endosome compartment (ERC), retrograde early endosome to Golgi, and endosome to plasma membrane (rapid recycling) protein transport. Involved in the regulation of Golgi maintenance and morphology. Involved in the recycling of internalized D1 dopamine receptor. Plays a role in cardiac protein trafficking probably implicating ANK2. Involved in the ventricular membrane targeting of SLC8A1 and CACNA1C and probably the atrial membrane localization of CACNA1GG and CACNA1H implicated in the regulation of atrial myocyte excitability and cardiac conduction. In conjunction with EHD4 may be involved in endocytic trafficking of KDR/VEGFR2 implicated in control of glomerular function. Involved in the rapid recycling of integrin beta-3 implicated in cell adhesion maintenance. Involved in the unidirectional retrograde dendritic transport of endocytosed BACE1 and in efficient sorting of BACE1 to axons implicating a function in neuronal APP processing. Plays a role in the formation of the ciliary vesicle, an early step in cilium biogenesis; possibly sharing redundant functions with EHD1. In Homo sapiens (Human), this protein is EH domain-containing protein 3.